Here is a 322-residue protein sequence, read N- to C-terminus: uncharacterized protein (322 aa).

4 consecutive transmembrane segments (helical) span residues 24–44 (LLHL…IQIT), 68–88 (LFFE…LIFI), 100–120 (IVTS…TPTF), and 125–145 (VQLI…MPSL).

The protein localises to the cell membrane. This is an uncharacterized protein from Bacillus subtilis (strain 168).